Reading from the N-terminus, the 720-residue chain is Protein O-mannosyl-transferase 1 (720 aa).

8 helical membrane-spanning segments follow: residues 7–27 (PVSVTVEINVLLLAVTALALF), 67–87 (FGHMILALGAYLGGFDGNFVW), 105–125 (LIPALAGSFCVPLAYLVVVEL), 127–147 (YSHFSALGACALLLMENSLIV), 150–170 (RFMLLESVLIFFLLLAVLSYL), 178–198 (SFFKWFWLVICGVSCAFGIGV), 201–221 (MGMFTYFLLLSLAAVHTWQLI), and 239–259 (FLALVVLPVIMYLGFFYIHLT). MIR domains lie at 291 to 354 (PLDV…IKDP), 365 to 422 (PKPV…VDIV), and 426 to 486 (SEKE…VEEH). The next 4 helical transmembrane spans lie at 570–590 (IVTWTTGNITLVVYCLLFLTY), 609–629 (LVLAGVVCLGGWAVNYLPFFL), 633–653 (TLFLYHYLPALTFKILQIPIV), and 670–690 (AFGGVILAVLCSVYMSYHSLS).

This sequence belongs to the glycosyltransferase 39 family. In terms of tissue distribution, widely expressed. Has particularly strong expression in testis, ovary, brain, liver and heart.

The protein resides in the endoplasmic reticulum membrane. The catalysed reaction is a di-trans,poly-cis-dolichyl beta-D-mannosyl phosphate + L-seryl-[protein] = 3-O-(alpha-D-mannosyl)-L-seryl-[protein] + a di-trans,poly-cis-dolichyl phosphate + H(+). It carries out the reaction a di-trans,poly-cis-dolichyl beta-D-mannosyl phosphate + L-threonyl-[protein] = 3-O-(alpha-D-mannosyl)-L-threonyl-[protein] + a di-trans,poly-cis-dolichyl phosphate + H(+). It participates in protein modification; protein glycosylation. In terms of biological role, transfers mannosyl residues to the hydroxyl group of serine or threonine residues. Coexpression of both POMT1 and POMT2 is necessary for enzyme activity, expression of either POMT1 or POMT2 alone is insufficient. This Danio rerio (Zebrafish) protein is Protein O-mannosyl-transferase 1.